The following is a 366-amino-acid chain: Cyclic amide hydrolase (366 aa).

The segment at Met1–Gly103 is RU A. Substrate-binding positions include Arg51 and Ser82–Gly83. The segment at Arg110–Pro247 is RU B. Lys160 is an active-site residue. Substrate-binding positions include Arg192, Ser230–Ala231, Arg327, and Ser346–Gly347. Ser230 acts as the Nucleophile in catalysis. An RU C region spans residues Phe253–Ala366.

The protein belongs to the cyclic amide hydrolase (CyAH) family. In terms of assembly, homotetramer.

In terms of biological role, cyclic amide hydrolase of unknown substrate specificity. Catalyzes the hydrolytic ring-opening of a cyclic amide. Does not act on cyanuric acid nor barbituric acid. The polypeptide is Cyclic amide hydrolase (Azorhizobium caulinodans (strain ATCC 43989 / DSM 5975 / JCM 20966 / LMG 6465 / NBRC 14845 / NCIMB 13405 / ORS 571)).